Here is a 152-residue protein sequence, read N- to C-terminus: Endoribonuclease YbeY (152 aa).

The Zn(2+) site is built by His-118, His-122, and His-128.

The protein belongs to the endoribonuclease YbeY family. The cofactor is Zn(2+).

Its subcellular location is the cytoplasm. In terms of biological role, single strand-specific metallo-endoribonuclease involved in late-stage 70S ribosome quality control and in maturation of the 3' terminus of the 16S rRNA. The chain is Endoribonuclease YbeY from Lacticaseibacillus casei (strain BL23) (Lactobacillus casei).